We begin with the raw amino-acid sequence, 237 residues long: Cytosolic-abundant heat soluble protein 86272 (237 aa).

Residues 96–125 (FKDQEKYSREQAAIARAHDKDLEKKTEEYR) are disordered. Basic and acidic residues predominate over residues 111-125 (RAHDKDLEKKTEEYR). Residues 115-193 (KDLEKKTEEY…MNALEQSKMA (79 aa)) are a coiled coil. CAHS motif regions lie at residues 124–142 (YRKTAEAEAEKIRKELEKQ) and 161–179 (QKREVDLEAKYAKKELEHE). Residues 204–215 (AGTTVSGGTTVS) show a composition bias toward low complexity. A disordered region spans residues 204-237 (AGTTVSGGTTVSEHTEVHDGKEKKSLGEKIKSLF). Residues 216–237 (EHTEVHDGKEKKSLGEKIKSLF) show a composition bias toward basic and acidic residues.

It belongs to the Cytosolic-abundant heat soluble protein (CAHS) family.

It localises to the cytoplasm. Its function is as follows. CAHS proteins are cytosolic heat soluble proteins that seem to contribute to the anhydrobiosis in tardigrades, but their specific mechanisms are yet to be identified. It is possible that protection during anhydrobiosis might occur via the stabilization of vitrifying small molecules such as sugars, but not via the direct glass transition of CAHS proteins themselves. The sequence is that of Cytosolic-abundant heat soluble protein 86272 from Hypsibius exemplaris (Freshwater tardigrade).